The chain runs to 113 residues: U11-theraphotoxin-Hhn1a (113 aa).

The N-terminal stretch at 1-21 (MNTVRVTFLLVFVLAVSLGQA) is a signal peptide. A propeptide spanning residues 22–74 (DKDENRMEMQEKTEQGKSYLDFAENLLLQKLEELEAKPLEEDSEESRNSRQKR) is cleaved from the precursor. Basic and acidic residues predominate over residues 57 to 69 (AKPLEEDSEESRN). Residues 57–83 (AKPLEEDSEESRNSRQKRCIGEGVPCD) are disordered. 3 disulfides stabilise this stretch: Cys-75–Cys-90, Cys-82–Cys-95, and Cys-89–Cys-110.

Belongs to the neurotoxin 14 (magi-1) family. 01 (HNTX-16) subfamily. Expressed by the venom gland.

It localises to the secreted. Its function is as follows. Probable ion channel inhibitor. The protein is U11-theraphotoxin-Hhn1a of Cyriopagopus hainanus (Chinese bird spider).